Reading from the N-terminus, the 245-residue chain is Zinc finger CCCH domain-containing protein 54 (245 aa).

The segment at 92-119 (TYCAVACPAFRNGACHRGDSCEFAHGVF) adopts a C3H1-type zinc-finger fold. The interval 175–204 (GNGDGVTMRMDDEGYDTSRSPVRSGKDDLD) is disordered.

Interacts with MARD1/FLZ9 and RD21A. As to expression, specifically expressed in embryo (at protein level).

The protein localises to the nucleus. Embryo-specific transcription factor required at the globular to heart stage transition in embryo development. In Arabidopsis thaliana (Mouse-ear cress), this protein is Zinc finger CCCH domain-containing protein 54.